Consider the following 270-residue polypeptide: Ribosomal RNA small subunit methyltransferase A (270 aa).

S-adenosyl-L-methionine-binding residues include asparagine 15, isoleucine 17, glycine 42, glutamate 64, aspartate 89, and asparagine 108.

It belongs to the class I-like SAM-binding methyltransferase superfamily. rRNA adenine N(6)-methyltransferase family. RsmA subfamily.

The protein resides in the cytoplasm. It catalyses the reaction adenosine(1518)/adenosine(1519) in 16S rRNA + 4 S-adenosyl-L-methionine = N(6)-dimethyladenosine(1518)/N(6)-dimethyladenosine(1519) in 16S rRNA + 4 S-adenosyl-L-homocysteine + 4 H(+). Functionally, specifically dimethylates two adjacent adenosines (A1518 and A1519) in the loop of a conserved hairpin near the 3'-end of 16S rRNA in the 30S particle. May play a critical role in biogenesis of 30S subunits. The chain is Ribosomal RNA small subunit methyltransferase A from Anaplasma marginale (strain Florida).